Consider the following 330-residue polypeptide: Ketol-acid reductoisomerase (NADP(+)) (330 aa).

The KARI N-terminal Rossmann domain occupies 3–184 (LPVYYDKDID…GGGRMGVLKT (182 aa)). NADP(+)-binding positions include 26–29 (YGAQ), S52, and S54. H109 is an active-site residue. G135 provides a ligand contact to NADP(+). Residues 185–329 (SFKEECESDL…EILRAPFNHK (145 aa)) enclose the KARI C-terminal knotted domain. Mg(2+) is bound by residues D193, E197, E229, and E233. A substrate-binding site is contributed by S254.

This sequence belongs to the ketol-acid reductoisomerase family. It depends on Mg(2+) as a cofactor.

It catalyses the reaction (2R)-2,3-dihydroxy-3-methylbutanoate + NADP(+) = (2S)-2-acetolactate + NADPH + H(+). The catalysed reaction is (2R,3R)-2,3-dihydroxy-3-methylpentanoate + NADP(+) = (S)-2-ethyl-2-hydroxy-3-oxobutanoate + NADPH + H(+). It participates in amino-acid biosynthesis; L-isoleucine biosynthesis; L-isoleucine from 2-oxobutanoate: step 2/4. Its pathway is amino-acid biosynthesis; L-valine biosynthesis; L-valine from pyruvate: step 2/4. Its function is as follows. Involved in the biosynthesis of branched-chain amino acids (BCAA). Catalyzes an alkyl-migration followed by a ketol-acid reduction of (S)-2-acetolactate (S2AL) to yield (R)-2,3-dihydroxy-isovalerate. In the isomerase reaction, S2AL is rearranged via a Mg-dependent methyl migration to produce 3-hydroxy-3-methyl-2-ketobutyrate (HMKB). In the reductase reaction, this 2-ketoacid undergoes a metal-dependent reduction by NADPH to yield (R)-2,3-dihydroxy-isovalerate. This Helicobacter pylori (strain HPAG1) protein is Ketol-acid reductoisomerase (NADP(+)).